The following is a 491-amino-acid chain: G2/mitotic-specific cyclin-A (491 aa).

The interval 1-21 (MASFQIHQDMSNKENPGIKIP) is disordered. One can recognise a Cyclin N-terminal domain in the interval 206–332 (DILEYFRESE…ILKILSFDLC (127 aa)).

Belongs to the cyclin family. Cyclin AB subfamily. In terms of assembly, component of the Frs-CycA-Cdk1 complex composed of CycA, Cdk1 and Z600. Interacts (via C-terminus) with Z600. Interacts with otu and (via C-terminus) with bam; the interaction stabilizes CycA by negatively regulating its ubiquitination. In terms of processing, ubiquitinated. Ubiquitination state is negatively regulated by a deubiquitinase complex made up of bam and otu.

Essential for the control of the cell cycle at the G2/M (mitosis) transition. Interacts with the Cdk1 and Cdk2 protein kinases to form MPF. G2/M cyclins accumulate steadily during G2 and are abruptly destroyed at mitosis. The sequence is that of G2/mitotic-specific cyclin-A (CycA) from Drosophila melanogaster (Fruit fly).